Reading from the N-terminus, the 69-residue chain is uncharacterized protein (69 aa).

Residues 10 to 64 enclose the HTH cro/C1-type domain; that stretch reads IRAFRKLKGYTQEGFAKALGISVSILGEIERGNRLPSAAIIQDAADVLNISADEL. The segment at residues 21 to 40 is a DNA-binding region (H-T-H motif); that stretch reads QEGFAKALGISVSILGEIER.

This is an uncharacterized protein from Bacillus subtilis (strain 168).